Here is a 471-residue protein sequence, read N- to C-terminus: U1 small nuclear ribonucleoprotein 70 kDa (471 aa).

The tract at residues 48-78 (FEDPRDAPPPTRAETREERMERKRREKIERR) is disordered. Residues 60–78 (AETREERMERKRREKIERR) show a composition bias toward basic and acidic residues. Residues 92–202 (HNDQNAQGDA…GGGLGGTRRG (111 aa)) form a required for interaction with U1 RNA region. The region spanning 103 to 184 (KTLFVARVNY…LVDVERGRTV (82 aa)) is the RRM domain. The interval 187–471 (WRPRRLGGGL…NGYMMEPPME (285 aa)) is disordered. A compositionally biased stretch (gly residues) spans 192-201 (LGGGLGGTRR). The span at 207-245 (NIRHSGRDDTSRYDERDRDRERERDRRERSRERDKERER) shows a compositional bias: basic and acidic residues. Residues 246–259 (RRSRSRERRRRSRS) show a composition bias toward basic residues. Basic and acidic residues predominate over residues 260–293 (REKEERKRSRERSRDKDKDKDKDKDKEKDKDKDR). The span at 294–303 (DRKRRSRSRE) shows a compositional bias: basic residues. Basic and acidic residues-rich tracts occupy residues 304-321 (RKRERDRDREKKEDRVEG) and 344-428 (IELK…ERVP).

As to quaternary structure, component of the U1 snRNP. The U1 snRNP is composed of the U1 snRNA and the 7 core Sm proteins snrpb, snrpd1, snrpd2, snrpd3, snrpe, snrpf and snrpg that assemble in a heptameric protein ring on the Sm site of the small nuclear RNA to form the core snRNP, and at least three U1 snRNP-specific proteins snrnp70/U1-70K, snrpa/U1-A and snrpc/U1-C.

The protein localises to the nucleus speckle. The protein resides in the nucleus. It localises to the nucleoplasm. Its function is as follows. Component of the spliceosomal U1 snRNP, which is essential for recognition of the pre-mRNA 5' splice-site and the subsequent assembly of the spliceosome. snrnp70 binds to the loop I region of U1-snRNA. In Xenopus tropicalis (Western clawed frog), this protein is U1 small nuclear ribonucleoprotein 70 kDa (snrnp70).